The following is a 311-amino-acid chain: Solute carrier family 25 member 36 (311 aa).

Solcar repeat units lie at residues 4–108 (RDTL…CKEK), 116–203 (DSTQ…IKQK), and 224–308 (SDFV…VVYL). 6 consecutive transmembrane segments (helical) span residues 7–27 (LVHLFAGGCGGTVGAILTCPL), 41–57 (LYISEVQLNTMAGASVN), 111–131 (GVFDPDSTQVHMASAAMAGFT), 180–200 (MSASYAGISETVIHFVIYESI), 226–246 (FVRMMLAAATSKTCATTIAYP), and 291–311 (QIPNTAIMMATYELVVYLLNG).

It belongs to the mitochondrial carrier (TC 2.A.29) family.

It localises to the mitochondrion inner membrane. The catalysed reaction is UTP(in) + CTP(out) = UTP(out) + CTP(in). The enzyme catalyses CTP(out) + UDP(in) = CTP(in) + UDP(out). It catalyses the reaction UMP(in) + CTP(out) = UMP(out) + CTP(in). It carries out the reaction dUTP(in) + CTP(out) = dUTP(out) + CTP(in). The catalysed reaction is dUMP(in) + CTP(out) = dUMP(out) + CTP(in). The enzyme catalyses CDP(in) + CTP(out) = CDP(out) + CTP(in). It catalyses the reaction CTP(out) + CMP(in) = CTP(in) + CMP(out). It carries out the reaction dCTP(in) + CTP(out) = dCTP(out) + CTP(in). The catalysed reaction is dCDP(in) + CTP(out) = dCDP(out) + CTP(in). The enzyme catalyses dCMP(in) + CTP(out) = dCMP(out) + CTP(in). It catalyses the reaction GTP(in) + CTP(out) = GTP(out) + CTP(in). It carries out the reaction CTP(out) + GDP(in) = CTP(in) + GDP(out). The catalysed reaction is GMP(in) + CTP(out) = GMP(out) + CTP(in). The enzyme catalyses dGTP(in) + CTP(out) = dGTP(out) + CTP(in). It catalyses the reaction dGMP(in) + CTP(out) = dGMP(out) + CTP(in). It carries out the reaction ITP(in) + CTP(out) = ITP(out) + CTP(in). The catalysed reaction is IDP(in) + CTP(out) = IDP(out) + CTP(in). The enzyme catalyses IMP(in) + CTP(out) = IMP(out) + CTP(in). It catalyses the reaction CTP(out) = CTP(in). Functionally, mitochondrial transporter that imports/exports pyrimidine nucleotides into and from mitochondria. Selectively transports cytosine, guanosine, inosine and uridine (deoxy)nucleoside mono-, di-, and triphosphates by antiport mechanism. Catalyzes uniport at much lower rate. May import (deoxy)nucleoside triphosphates in exchange for intramitochondrial (deoxy)nucleoside mono- and diphosphates, thus providing precursors necessary for de novo synthesis of mitochondrial DNA and RNA while exporting products of their catabolism. Participates in mitochondrial genome maintenance, regulation of mitochondrial membrane potential and mitochondrial respiration. The protein is Solute carrier family 25 member 36 (Slc25a36) of Mus musculus (Mouse).